We begin with the raw amino-acid sequence, 189 residues long: Probable nicotinate-nucleotide adenylyltransferase (189 aa).

Belongs to the NadD family.

The enzyme catalyses nicotinate beta-D-ribonucleotide + ATP + H(+) = deamido-NAD(+) + diphosphate. Its pathway is cofactor biosynthesis; NAD(+) biosynthesis; deamido-NAD(+) from nicotinate D-ribonucleotide: step 1/1. Functionally, catalyzes the reversible adenylation of nicotinate mononucleotide (NaMN) to nicotinic acid adenine dinucleotide (NaAD). This chain is Probable nicotinate-nucleotide adenylyltransferase, found in Staphylococcus aureus (strain USA300 / TCH1516).